A 227-amino-acid chain; its full sequence is GTPase ERas (227 aa).

Over residues 1-19 (MALPTKSSILDLSSGTPCT) the composition is skewed to polar residues. The disordered stretch occupies residues 1 to 25 (MALPTKSSILDLSSGTPCTRSPEES). 48 to 55 (GASGVGKS) contacts GTP. Residues 70-78 (HDPTIQDSY) carry the Effector region motif. GTP contacts are provided by residues 95-99 (DTSGQ) and 151-154 (NKCD). S-palmitoyl cysteine attachment occurs at residues C220 and C222. At C224 the chain carries Cysteine methyl ester. A lipid anchor (S-farnesyl cysteine) is attached at C224. The propeptide at 225-227 (SVA) is removed in mature form.

Belongs to the small GTPase superfamily. Ras family. Interacts with PIK3CD. Expressed in several undifferentiated mouse embryonic stem cell lines.

It localises to the cell membrane. It catalyses the reaction GTP + H2O = GDP + phosphate + H(+). With respect to regulation, alternates between an inactive form bound to GDP and an active form bound to GTP. Activated by a guanine nucleotide-exchange factor (GEF) and inactivated by a GTPase-activating protein (GAP). Ras proteins bind GDP/GTP and possess intrinsic GTPase activity. Plays an important role in the tumor-like growth properties of embryonic stem cells. The protein is GTPase ERas (Eras) of Mus musculus (Mouse).